The following is a 202-amino-acid chain: Probable thymidylate kinase (202 aa).

Gly13 to Thr20 lines the ATP pocket.

Belongs to the thymidylate kinase family.

The catalysed reaction is dTMP + ATP = dTDP + ADP. This Picrophilus torridus (strain ATCC 700027 / DSM 9790 / JCM 10055 / NBRC 100828 / KAW 2/3) protein is Probable thymidylate kinase.